Reading from the N-terminus, the 100-residue chain is Small ribosomal subunit protein uS14c (100 aa).

A disordered region spans residues 1 to 31 (MARKSLIQREKKRQKLEQKYHSIRRSSKKEI).

This sequence belongs to the universal ribosomal protein uS14 family. As to quaternary structure, part of the 30S ribosomal subunit.

The protein resides in the plastid. It localises to the chloroplast. Binds 16S rRNA, required for the assembly of 30S particles. The chain is Small ribosomal subunit protein uS14c from Nicotiana tomentosiformis (Tobacco).